A 455-amino-acid chain; its full sequence is Ribosome biogenesis protein NOP53 (455 aa).

A compositionally biased stretch (polar residues) spans 1–15 (MAPTNLTKKPSQYKQ). The tract at residues 1-25 (MAPTNLTKKPSQYKQSSRKGKKAWR) is disordered. Residues 16-25 (SSRKGKKAWR) show a composition bias toward basic residues. The residue at position 31 (Ser-31) is a Phosphoserine. The interval 264-333 (HLMETLDDNE…RNKAKRHEEK (70 aa)) is disordered. Residues 268-294 (TLDDNEEEESSSNEEEEEEEEENENEN) are compositionally biased toward acidic residues. Positions 314 to 328 (VKNKKKTKYQRNKAK) are enriched in basic residues.

This sequence belongs to the NOP53 family. In terms of assembly, interacts with CBF5, FPR3, FPR4, NOP2, PIH1, RRN3, RRP6 and PAP2. Interacts with pre-60S ribosomal particles.

The protein resides in the nucleus. Its subcellular location is the nucleolus. It localises to the nucleoplasm. Its function is as follows. Late-acting factor in the nuclear maturation of 60S ribosomal subunits, which is required for normal acquisition of export competence. Required for the export of the large subunit. Acts to stimulate the RNase activity of the exosome complex, and may recruit the exosome to 7S pre-rRNA for processing. Associates with numerous RNAs including the 27S and 7S pre-rRNAs and the box H/ACA snoRNA snR37. Also interacts (via N-terminal region) with the mature 25S rRNA and the mature 5.8S rRNA. In Saccharomyces cerevisiae (strain ATCC 204508 / S288c) (Baker's yeast), this protein is Ribosome biogenesis protein NOP53.